Reading from the N-terminus, the 585-residue chain is MAARFELLDDLPAACLSPCGPPNPTELFSEARRLALEQLLAGGPDAWAAFLRRERLGRFLNADEVREVLGAAERPGEDGAAVAEDSFGSSHECSSGTYFPEQSDLEPPALELGWPSFYQGAYRGATRVEAHFQPRGAGAGGPYGCKDALRQQLRSAREVIAVVMDVFSDIDIFRDLQESCRKRGVAVYILLDQTLLPHFLDMCMDLRVHPEQEKLMTVRTITGNIYYARSGTKVVGKVHEKFTLIDGIRVATGSYSFTWTDGKLNSSNLVILSGQVVEHFDLEFRILYAQSEPISSKLLSNFQINSKFDHLADRKPQSKEPTLGNLLRMRLARLSSTPRKSNLGPEEPPKDRAKPKRPDSEASTISDEDYFHSHKDQLEDSKVADAATQTEPREEMAAVSLSEVGTQTSSSMMCVGTQTTVVTRAASSQATVWSKSTTTQTEADESFLPQGAQSKEGSPASKMSVSRSSSVRSSSSVSSQGSLASSVSSHVSLTAADLHTPAYPKYLGLGTPHLDLCLRDSFRNLSKERQVHFTGIRSRLTQMLTVLSRRTLFTEHYLSYSPGSFTRASTNLVSVRDIALYPPYQ.

The DUF1669 stretch occupies residues 1-296 (MAARFELLDD…LYAQSEPISS (296 aa)). Phosphoserine is present on Ser-295. 2 disordered regions span residues 334-411 (LSST…TSSS) and 425-482 (AASS…SQGS). The segment at 337 to 585 (TPRKSNLGPE…RDIALYPPYQ (249 aa)) is required for interaction with KIF22 and function in chromosome congression. Basic and acidic residues-rich tracts occupy residues 347-360 (EPPKDRAKPKRPDS) and 369-383 (DYFHSHKDQLEDSKV). Polar residues predominate over residues 425 to 441 (AASSQATVWSKSTTTQT). Ser-458 carries the post-translational modification Phosphoserine. The segment covering 458–482 (SPASKMSVSRSSSVRSSSSVSSQGS) has biased composition (low complexity). Thr-511 is subject to Phosphothreonine.

The protein belongs to the FAM83 family. Interacts with FBXW7; promotes FBXW7 degradation. May interact with RAF1. Interacts with KIF22; recruits KIF22 to mitotic spindle microtubules. Interacts (via C-terminus) with DYNLL1. Interacts with HMMR. Directly interacts (via DUF1669) with CSNK1A1 and CSNK1A1L. Post-translationally, phosphorylated during mitosis.

Its subcellular location is the cytoplasm. The protein localises to the cytoskeleton. It is found in the spindle. The protein resides in the spindle pole. Its function is as follows. Through the degradation of FBXW7, may act indirectly on the expression and downstream signaling of MTOR, JUN and MYC. May play also a role in cell proliferation through activation of the ERK1/ERK2 signaling cascade. May also be important for proper chromosome congression and alignment during mitosis through its interaction with KIF22. The protein is Protein FAM83D of Mus musculus (Mouse).